Here is a 348-residue protein sequence, read N- to C-terminus: MRIEQELKLGFKDVLFRPKRSTLKSRSQVNLTRDFTFKHSGRQWSGVPVIAANMDSVGSFEMAKALAEHGVMTAVHKHYTVNDWADFVKSADNATLKNVMVSTGTSDADFQKTKDIMALSDELIFICVDIANGYSEHLVEYVERVRAEFPDKVISAGNVVTGDMCEELILAGADIVKVGIGPGSVCTTRVKTGVGYPQLSAIIECGDAAHGLGGMIIGDGGCSCAGDVSKAFGGGADFVMLGGMLAGHEESGGEIIEKDGETFMKFYGMSSQSAMDKHSGGVAKYRAAEGKTVLLPFRGSVHGTISDILGGVRSTCTYVGAAKLKELTKRTTFIRVQEQENNVFGKEK.

Residue 108-131 coordinates NADP(+); it reads ADFQKTKDIMALSDELIFICVDIA. K(+) contacts are provided by glycine 181 and glycine 183. The active-site Thioimidate intermediate is the cysteine 186. Position 216-239 (216-239) interacts with NADP(+); it reads IIGDGGCSCAGDVSKAFGGGADFV.

Belongs to the IMPDH/GMPR family. GuaC type 1 subfamily. Homotetramer.

It carries out the reaction IMP + NH4(+) + NADP(+) = GMP + NADPH + 2 H(+). Catalyzes the irreversible NADPH-dependent deamination of GMP to IMP. It functions in the conversion of nucleobase, nucleoside and nucleotide derivatives of G to A nucleotides, and in maintaining the intracellular balance of A and G nucleotides. In Vibrio parahaemolyticus serotype O3:K6 (strain RIMD 2210633), this protein is GMP reductase.